An 87-amino-acid polypeptide reads, in one-letter code: Small ribosomal subunit protein bS16 (87 aa).

The protein belongs to the bacterial ribosomal protein bS16 family.

The chain is Small ribosomal subunit protein bS16 from Onion yellows phytoplasma (strain OY-M).